The chain runs to 452 residues: tRNA modification GTPase MnmE (452 aa).

The (6S)-5-formyl-5,6,7,8-tetrahydrofolate site is built by R28, E85, and K124. Positions 220-378 constitute a TrmE-type G domain; the sequence is GMNVVLVGRP…LRTELLRAAG (159 aa). N230 serves as a coordination point for K(+). GTP is bound by residues 230–235, 249–255, 274–277, and 359–361; these read NVGKSS, TDVAGTT, DTAG, and SAR. S234 provides a ligand contact to Mg(2+). K(+)-binding residues include T249, V251, and T254. Position 255 (T255) interacts with Mg(2+). Residue K452 participates in (6S)-5-formyl-5,6,7,8-tetrahydrofolate binding.

This sequence belongs to the TRAFAC class TrmE-Era-EngA-EngB-Septin-like GTPase superfamily. TrmE GTPase family. Homodimer. Heterotetramer of two MnmE and two MnmG subunits. K(+) serves as cofactor.

It is found in the cytoplasm. Exhibits a very high intrinsic GTPase hydrolysis rate. Involved in the addition of a carboxymethylaminomethyl (cmnm) group at the wobble position (U34) of certain tRNAs, forming tRNA-cmnm(5)s(2)U34. This is tRNA modification GTPase MnmE from Azoarcus sp. (strain BH72).